A 476-amino-acid polypeptide reads, in one-letter code: MKVRVRLAPSPTGTLHLGTARTALFNWLFAKKEGGTFLLRIEDTDIERSREEYINDIYDGLQWLGINWDESPTIQSERVNEHKQIIKTLVDKGFAYKCYASEAELDEMRETQKRNGLAPKYDNRHRNLTPEQESEFIKSGRDPVIRFKISDEKLISWNDLIRGKMTWSGKDLGGDMVIARRAPANSIGDPLYNLVVVADDSAMKISHVIRGEDHLANTAKQILLYEALDLNIPVFAHTPLILNSEGKKLSKRDGVTSISEFKKMGYTSEAMANYMTLLGWSVPEGINERFNISEVSEIFSFKKVNKASAKFDWDKLNWLNSQVIHEMSAETLLENLEPLFKENGWHLPSHEWGINLVGLIGPSMVLINDGVDQAKPFFEEQELSEDGKKQLEIKEAAVILKFILEKLEDTDAASFSKEKALDLINQATKSCEVKKGLVMKSLRAALFGTLNGPDLIQSWVLLSRFSKDRARISRLI.

The 'HIGH' region signature appears at 9–19 (PSPTGTLHLGT). The 'KMSKS' region motif lies at 248-252 (KLSKR). ATP is bound at residue K251.

Belongs to the class-I aminoacyl-tRNA synthetase family. Glutamate--tRNA ligase type 1 subfamily. Monomer.

The protein localises to the cytoplasm. It catalyses the reaction tRNA(Glu) + L-glutamate + ATP = L-glutamyl-tRNA(Glu) + AMP + diphosphate. Functionally, catalyzes the attachment of glutamate to tRNA(Glu) in a two-step reaction: glutamate is first activated by ATP to form Glu-AMP and then transferred to the acceptor end of tRNA(Glu). This is Glutamate--tRNA ligase from Prochlorococcus marinus (strain NATL2A).